The chain runs to 162 residues: NADH-quinone oxidoreductase subunit I (162 aa).

4Fe-4S ferredoxin-type domains follow at residues 54–83 (RRYENGEERCIACKLCEAVCPAMAITIESE) and 93–122 (TRYDIDLTKCIFCGFCEESCPVDSIVETQI). Residues cysteine 63, cysteine 66, cysteine 69, cysteine 73, cysteine 102, cysteine 105, cysteine 108, and cysteine 112 each contribute to the [4Fe-4S] cluster site.

The protein belongs to the complex I 23 kDa subunit family. NDH-1 is composed of 14 different subunits. Subunits NuoA, H, J, K, L, M, N constitute the membrane sector of the complex. It depends on [4Fe-4S] cluster as a cofactor.

Its subcellular location is the cell inner membrane. It catalyses the reaction a quinone + NADH + 5 H(+)(in) = a quinol + NAD(+) + 4 H(+)(out). In terms of biological role, NDH-1 shuttles electrons from NADH, via FMN and iron-sulfur (Fe-S) centers, to quinones in the respiratory chain. The immediate electron acceptor for the enzyme in this species is believed to be ubiquinone. Couples the redox reaction to proton translocation (for every two electrons transferred, four hydrogen ions are translocated across the cytoplasmic membrane), and thus conserves the redox energy in a proton gradient. In Burkholderia thailandensis (strain ATCC 700388 / DSM 13276 / CCUG 48851 / CIP 106301 / E264), this protein is NADH-quinone oxidoreductase subunit I.